We begin with the raw amino-acid sequence, 260 residues long: Indole-3-glycerol phosphate synthase (260 aa).

This sequence belongs to the TrpC family.

It carries out the reaction 1-(2-carboxyphenylamino)-1-deoxy-D-ribulose 5-phosphate + H(+) = (1S,2R)-1-C-(indol-3-yl)glycerol 3-phosphate + CO2 + H2O. Its pathway is amino-acid biosynthesis; L-tryptophan biosynthesis; L-tryptophan from chorismate: step 4/5. The sequence is that of Indole-3-glycerol phosphate synthase from Leifsonia xyli subsp. xyli (strain CTCB07).